The sequence spans 855 residues: E3 ubiquitin-protein ligase TRIM71 (855 aa).

Alanine 2 is modified (N-acetylalanine). An RING-type zinc finger spans residues 12-94 (CLLCKEMCGS…ALKLRCPVCD (83 aa)). The span at 26–42 (SSNSSASSSSSQTSTSS) shows a compositional bias: low complexity. Disordered stretches follow at residues 26-48 (SSNSSASSSSSQTSTSSAGGGGP) and 127-177 (EEPP…SPGS). A compositionally biased stretch (gly residues) spans 135–145 (RAGGGPGGAGG). Residues 147–157 (SNHRHHAHHPA) show a composition bias toward basic residues. The B box-type 1; atypical zinc finger occupies 181–228 (RRPHGCSSCDEGNAASSRCLDCQEHLCDNCVRAHQRVRLTKDHYIERG). Residues 260–301 (ERLGFCQHHDDEVLHLYCDTCSVPICRECTLGRHGGHSFAYL) form a B box-type 2 zinc finger. The Zn(2+) site is built by cysteine 265, histidine 268, cysteine 288, and histidine 293. Coiled-coil stretches lie at residues 314 to 352 (QLLADAQQGRQALQLSIEQAQTVAEQVEMKAKVVQSEVK) and 378 to 411 (QVKAKSLFLQVEKLRQSLSKLESTISAVQQVLEE). A Filamin repeat occupies 466–567 (SSGAFAPLTK…IENSPFKVVV (102 aa)). 6 NHL repeats span residues 580–623 (GLSF…FKPC), 627–670 (HHKF…FTFE), 674–717 (LLKF…FGPD), 721–764 (LNKY…IHPD), 768–811 (ARFL…FEAN), and 815–855 (LCKF…ILIF).

It belongs to the TRIM/RBCC family. Interacts (via NHL repeats) with AGO2; the interaction increases in presence of RNA. Interacts with HSP90AA1. Interacts (via NHL repeats) with MOV10, PABPC1, PUM1, PUM2, STAU2, XRN1 and XRN2 in an RNA-dependent manner. Interacts with SHCBP1; leading to enhance its stability. Post-translationally, autoubiquitinated. Highly expressed in undifferentiated embryonic stem cells (ESCs). Expressed in the epiblast and in interfollicular epidermal stem cells during early development. Also expressed in male germ cells and in the reproductive tract. Highly expressed in neuroepithelial cells, and its expression declines as neurogenesis proceeds (at protein level). Expressed in ependymal cells of the brain.

The protein resides in the cytoplasm. Its subcellular location is the P-body. The enzyme catalyses S-ubiquitinyl-[E2 ubiquitin-conjugating enzyme]-L-cysteine + [acceptor protein]-L-lysine = [E2 ubiquitin-conjugating enzyme]-L-cysteine + N(6)-ubiquitinyl-[acceptor protein]-L-lysine.. It functions in the pathway protein modification; protein ubiquitination. Functionally, E3 ubiquitin-protein ligase that cooperates with the microRNAs (miRNAs) machinery and promotes embryonic stem cells proliferation and maintenance. Binds to miRNAs and associates with AGO2, participating in post-transcriptional repression of transcripts such as CDKN1A. Facilitates the G1-S transition to promote rapid embryonic stem cell self-renewal by repressing CDKN1A expression. In addition, participates in post-transcriptional mRNA repression in a miRNA independent mechanism. Required to maintain proliferation and prevent premature differentiation of neural progenitor cells during early neural development: positively regulates FGF signaling by controlling the stability of SHCBP1. Specific regulator of miRNA biogenesis. miRNA Binds MIR29A hairpin and postranscriptionally modulates MIR29A levels, which indirectly regulates TET proteins expression. The polypeptide is E3 ubiquitin-protein ligase TRIM71 (Trim71) (Mus musculus (Mouse)).